The sequence spans 742 residues: ATP-dependent RNA helicase DBP7 (742 aa).

A disordered region spans residues 45–100; that stretch reads GKTVSRKRKANTTGDEGIIPGRGENSIKKLHKESSYSSEEQEKYKGRNAHNTQGRT. Residues 143–172 carry the Q motif motif; the sequence is DQFASLGVSSLLVSHLEQKMRIKKPTSIQK. The 195-residue stretch at 178–372 folds into the Helicase ATP-binding domain; sequence IIGNAGKNDF…NVALKDYKLI (195 aa). 191–198 provides a ligand contact to ATP; sequence AQTGSGKT. Residues 307 to 310 carry the DEGD box motif; that stretch reads DEGD. The Helicase C-terminal domain maps to 405–605; it reads TLAATLNNIT…ILMPAFKDVN (201 aa). The disordered stretch occupies residues 701-726; sequence AMGLQSSKDGNSEKKPTKENSKNKMF. Basic and acidic residues predominate over residues 710–722; sequence GNSEKKPTKENSK.

The protein belongs to the DEAD box helicase family. DDX31/DBP7 subfamily.

It localises to the nucleus. The protein localises to the nucleolus. The catalysed reaction is ATP + H2O = ADP + phosphate + H(+). Functionally, ATP-binding RNA helicase involved in the biogenesis of 60S ribosomal subunits and is required for the normal formation of 25S and 5.8S rRNAs. This is ATP-dependent RNA helicase DBP7 (DBP7) from Saccharomyces cerevisiae (strain ATCC 204508 / S288c) (Baker's yeast).